Here is a 279-residue protein sequence, read N- to C-terminus: Urease accessory protein UreD (279 aa).

The protein belongs to the UreD family. In terms of assembly, ureD, UreF and UreG form a complex that acts as a GTP-hydrolysis-dependent molecular chaperone, activating the urease apoprotein by helping to assemble the nickel containing metallocenter of UreC. The UreE protein probably delivers the nickel.

The protein resides in the cytoplasm. Required for maturation of urease via the functional incorporation of the urease nickel metallocenter. The polypeptide is Urease accessory protein UreD (Streptococcus thermophilus (strain CNRZ 1066)).